Consider the following 74-residue polypeptide: MNGPRYAHSNYGGNKGGPSNSTSGVFAGDIRCQVSNKSIMLISLKITNSPNSNSRGSSSSSSTSKSSSKTSFTQ.

2 disordered regions span residues 1–26 (MNGP…SGVF) and 46–74 (ITNS…SFTQ). Residues 34 to 50 (VSNKSIMLISLKITNSP) traverse the membrane as a helical segment. Positions 47-74 (TNSPNSNSRGSSSSSSTSKSSSKTSFTQ) are enriched in low complexity.

It localises to the membrane. This is an uncharacterized protein from Dictyostelium discoideum (Social amoeba).